The chain runs to 625 residues: Threonine--tRNA ligase (625 aa).

The interval 1 to 149 (MRVLLIHAKR…RNYEAKTTAR (149 aa)) is editing domain. Catalytic stretches follow at residues 197–494 (NPVN…PYIP) and 198–494 (PVNK…PYIP). The Zn(2+) site is built by cysteine 291, histidine 342, and histidine 463.

The protein belongs to the class-II aminoacyl-tRNA synthetase family. As to quaternary structure, homodimer. Zn(2+) is required as a cofactor.

The protein localises to the cytoplasm. The catalysed reaction is tRNA(Thr) + L-threonine + ATP = L-threonyl-tRNA(Thr) + AMP + diphosphate + H(+). Catalyzes the attachment of threonine to tRNA(Thr) in a two-step reaction: L-threonine is first activated by ATP to form Thr-AMP and then transferred to the acceptor end of tRNA(Thr). Also edits incorrectly charged L-seryl-tRNA(Thr). This chain is Threonine--tRNA ligase, found in Hyperthermus butylicus (strain DSM 5456 / JCM 9403 / PLM1-5).